We begin with the raw amino-acid sequence, 384 residues long: G protein-coupled receptor 88 (384 aa).

Topologically, residues 1-35 (MTNSSSTSTSTTTGGSLLLLCEEEESWAGRRIPVS) are extracellular. Residue Asn3 is glycosylated (N-linked (GlcNAc...) asparagine). A helical transmembrane segment spans residues 36-56 (LLYSGLAIGGTLANGMVIYLV). Residues 57–73 (SSFRKLQTTSNAFIVNG) are Cytoplasmic-facing. A helical transmembrane segment spans residues 74-94 (CAADLSVCALWMPQEAVLGLL). Topologically, residues 95 to 116 (PSGSAEPPGDWDGGGGSYRLLR) are extracellular. The chain crosses the membrane as a helical span at residues 117–136 (GGLLGLGLTVSLLSHCLVAL). Topologically, residues 137 to 158 (NRYLLITRAPATYQVLYQRRHT) are cytoplasmic. A helical transmembrane segment spans residues 159–179 (VGMLALSWALALGLVLLLPPW). Over 180 to 195 (APKPGAEPPQVHYPAL) the chain is Extracellular. Residues 196–216 (LAAGALLAQTALLLHCYLGIV) form a helical membrane-spanning segment. The Cytoplasmic portion of the chain corresponds to 217 to 285 (RRVRVSVKRV…RAQRRLSGLS (69 aa)). Residues 286–306 (VLLLCCVFLLATQPLVWVSLA) form a helical membrane-spanning segment. Residues 307–310 (SGFS) lie on the Extracellular side of the membrane. Residues 311 to 331 (LPVPWGVQAASWLLCCALSAL) traverse the membrane as a helical segment. At 332–384 (NPLLYTWRNEEFRRSVRSVLPGVGDAAAAAAAATAVPAMSQAQLGTRAAGQHW) the chain is on the cytoplasmic side.

It belongs to the G-protein coupled receptor 1 family. Expressed predominantly in the striatum.

Its subcellular location is the cell membrane. The protein localises to the cell projection. The protein resides in the cilium membrane. It is found in the cytoplasm. It localises to the nucleus. Orphan G protein-coupled receptor implicated in a large repertoire of behavioral responses that engage motor activities, spatial learning, and emotional processing. May play a role in the regulation of cognitive and motor function. Couples with the heterotrimeric G protein complex of the G(i) subfamily, consisting of GNAI1, GNB1 and GNG2, thereby acting through a G(i)-mediated pathway. Plays a role in the attenuation of D1 dopamine receptor (D1R)-mediated cAMP response in ciliated cells. In on-ciliated cells, involved in the inhibition of the beta-2 adrenergic receptor (B2AR) response. This Mus musculus (Mouse) protein is G protein-coupled receptor 88 (Gpr88).